Here is a 211-residue protein sequence, read N- to C-terminus: GTP pyrophosphokinase YjbM (211 aa).

Guanosine 3'-diphosphate 5'-triphosphate is bound by residues 21 to 28 (KVKLKGIR), 41 to 42 (EF), and 46 to 48 (RVK). ATP-binding positions include 46-48 (RVK), Ser-52, 56-59 (KARR), Asp-72, and Arg-77. Arg-59 is a binding site for guanosine 3'-diphosphate 5'-triphosphate. Asp-72 is a binding site for Mg(2+). Guanosine 3'-diphosphate 5'-triphosphate contacts are provided by residues Arg-105, 112–114 (KES), and His-120. The active-site Proton acceptor is Glu-139. Guanosine 3'-diphosphate 5'-triphosphate-binding positions include Asn-148 and 151–155 (ATIEH).

It belongs to the RelA/SpoT family. As to quaternary structure, homotetramer.

It carries out the reaction GTP + ATP = guanosine 3'-diphosphate 5'-triphosphate + AMP. The enzyme catalyses GDP + ATP = guanosine 3',5'-bis(diphosphate) + AMP. It functions in the pathway purine metabolism; ppGpp biosynthesis; ppGpp from GTP: step 1/2. Allosterically regulated by its own products; pppGpp simulates synthesis 10-fold more than ppGpp. 2 pppGpp molecules bind in a regulatory cleft in the middle of the tetramer in an asymmetric manner. There is a specific contact of Lys-25 to the gamma-phosphate of pppGpp, explaining why pppGpp stimulates activity but ppGpp does not. In terms of biological role, functions as a (p)ppGpp synthase; GDP can be used instead of GTP, resulting in an increase of (p)ppGpp synthesis. The enzyme binds ATP, then GDP or GTP and catalysis is highly cooperative. In eubacteria ppGpp (guanosine 3'-diphosphate 5'-diphosphate) is a mediator of the stringent response that coordinates a variety of cellular activities in response to changes in nutritional abundance. Probably has a minor role in the stringent response. In Bacillus subtilis (strain 168), this protein is GTP pyrophosphokinase YjbM (yjbM).